A 175-amino-acid polypeptide reads, in one-letter code: Large ribosomal subunit protein mL67 (175 aa).

Belongs to the mitochondrion-specific ribosomal protein mL67 family. Component of the mitochondrial large ribosomal subunit (mt-LSU). Mature yeast 74S mitochondrial ribosomes consist of a small (37S) and a large (54S) subunit. The 37S small subunit contains a 15S ribosomal RNA (15S mt-rRNA) and at least 32 different proteins. The 54S large subunit contains a 21S rRNA (21S mt-rRNA) and at least 45 different proteins.

Its subcellular location is the mitochondrion. Functionally, component of the mitochondrial ribosome (mitoribosome), a dedicated translation machinery responsible for the synthesis of mitochondrial genome-encoded proteins, including at least some of the essential transmembrane subunits of the mitochondrial respiratory chain. The mitoribosomes are attached to the mitochondrial inner membrane and translation products are cotranslationally integrated into the membrane. mL67/mhr1 also has extraribosomal functions, being involved in regulation of mitochondrial DNA recombination, maintenance and repair, and generation of homoplasmic cells. mL67/mhr1 also acts as transcription factor involved in regulation of RNA polymerase II-dependent transcription. In Schizosaccharomyces pombe (strain 972 / ATCC 24843) (Fission yeast), this protein is Large ribosomal subunit protein mL67 (mhr1).